Consider the following 1150-residue polypeptide: C5a peptidase (1150 aa).

A signal peptide spans 1–31 (MRKKQKLPFDKLAIALMSTSILLNAQSDIKA). The disordered stretch occupies residues 33–73 (TVTEDTPAAEQAVETPQPTAVSEEVPSSKETKTPQTPDNAE). A Peptidase S8 domain is found at 99-581 (KATIRDLNDP…AGAVDAKKAS (483 aa)). Active-site charge relay system residues include Asp-130, His-193, and Ser-512. Composition is skewed to basic and acidic residues over residues 1029-1054 (EGHS…KPEQ) and 1061-1073 (PDKK…EKDS). Residues 1029–1116 (EGHSNKPEQD…RDQLPTTNDK (88 aa)) are disordered. A run of 3 repeats spans residues 1034–1050 (KPEQ…KPEA), 1051–1067 (KPEQ…KPET), and 1068–1084 (KPEK…TPQK). Positions 1034-1084 (KPEQDGSDQAPDKKPEAKPEQDGSGQTPDKKPETKPEKDSSGQTPGKTPQK) are 3 X 17 AA tandem repeats. The span at 1075 to 1089 (GQTPGKTPQKGQPSR) shows a compositional bias: polar residues. The LPXTG sorting signal motif lies at 1110-1114 (LPTTN). Thr-1113 bears the Pentaglycyl murein peptidoglycan amidated threonine mark. Positions 1114-1150 (NDKDTNRLHLLKLVMTTFFFGLVAHIFKTKRQKETKK) are cleaved as a propeptide — removed by sortase.

Belongs to the peptidase S8 family. Post-translationally, cleaved by SpeB protease; leading to its degradation. Degradation by SpeB is probably strictly regulated to preserve integrity of C5a peptidase.

Its subcellular location is the secreted. The protein localises to the cell wall. The enzyme catalyses The primary cleavage site is at 67-His-|-Lys-68 in human C5a with a minor secondary cleavage site at 58-Ala-|-Ser-59.. Its function is as follows. This virulence factor of S.pyogenes specifically cleaves the human serum chemotaxin C5a at '68-Lys-|-Asp-69' bond near its C-terminus, destroying its ability to serve as a chemoattractant. The sequence is that of C5a peptidase (scpA) from Streptococcus pyogenes serotype M18 (strain MGAS8232).